Here is a 121-residue protein sequence, read N- to C-terminus: SLLEFGMMILEETGKLAVPFYSSYGCYCGWGGKATPKDATDRCCFVHDCCYGNLPDCNPKSDRYKYKRVNGAIVCEQGTSCENRICECDKAAAICFRRNLNTYSKIYMLYPDFLCKGELKC.

Intrachain disulfides connect Cys26–Cys115, Cys28–Cys44, Cys43–Cys95, Cys49–Cys121, Cys50–Cys88, Cys57–Cys81, and Cys75–Cys86. Ca(2+)-binding residues include Tyr27, Gly29, and Gly31. His47 is an active-site residue. Asp48 is a binding site for Ca(2+). Asp89 is an active-site residue.

The protein belongs to the phospholipase A2 family. Group II subfamily. D49 sub-subfamily. It depends on Ca(2+) as a cofactor. Expressed by the venom gland.

It is found in the secreted. The enzyme catalyses a 1,2-diacyl-sn-glycero-3-phosphocholine + H2O = a 1-acyl-sn-glycero-3-phosphocholine + a fatty acid + H(+). Its function is as follows. PLA2 catalyzes the calcium-dependent hydrolysis of the 2-acyl groups in 3-sn-phosphoglycerides. This chain is Basic phospholipase A2 3, found in Daboia russelii (Russel's viper).